The following is a 301-amino-acid chain: Acetylglutamate kinase (301 aa).

Substrate-binding positions include 68–69, arginine 90, and asparagine 195; that span reads GG.

The protein belongs to the acetylglutamate kinase family. ArgB subfamily.

The protein localises to the cytoplasm. The enzyme catalyses N-acetyl-L-glutamate + ATP = N-acetyl-L-glutamyl 5-phosphate + ADP. It participates in amino-acid biosynthesis; L-arginine biosynthesis; N(2)-acetyl-L-ornithine from L-glutamate: step 2/4. Catalyzes the ATP-dependent phosphorylation of N-acetyl-L-glutamate. In Pseudomonas putida (strain GB-1), this protein is Acetylglutamate kinase.